The chain runs to 172 residues: Adenine phosphoribosyltransferase (172 aa).

Belongs to the purine/pyrimidine phosphoribosyltransferase family. As to quaternary structure, homodimer.

It is found in the cytoplasm. It catalyses the reaction AMP + diphosphate = 5-phospho-alpha-D-ribose 1-diphosphate + adenine. It participates in purine metabolism; AMP biosynthesis via salvage pathway; AMP from adenine: step 1/1. Functionally, catalyzes a salvage reaction resulting in the formation of AMP, that is energically less costly than de novo synthesis. The sequence is that of Adenine phosphoribosyltransferase from Prochlorococcus marinus (strain MIT 9211).